A 263-amino-acid polypeptide reads, in one-letter code: Acetylglutamate kinase (263 aa).

Substrate contacts are provided by residues 48–49, arginine 70, and asparagine 162; that span reads GG.

The protein belongs to the acetylglutamate kinase family. ArgB subfamily.

The protein resides in the cytoplasm. It catalyses the reaction N-acetyl-L-glutamate + ATP = N-acetyl-L-glutamyl 5-phosphate + ADP. The protein operates within amino-acid biosynthesis; L-arginine biosynthesis; N(2)-acetyl-L-ornithine from L-glutamate: step 2/4. In terms of biological role, catalyzes the ATP-dependent phosphorylation of N-acetyl-L-glutamate. This chain is Acetylglutamate kinase, found in Vibrio campbellii (strain ATCC BAA-1116).